Here is a 486-residue protein sequence, read N- to C-terminus: Cobyric acid synthase (486 aa).

The GATase cobBQ-type domain occupies A250–A438. C331 acts as the Nucleophile in catalysis. H430 is an active-site residue.

It belongs to the CobB/CobQ family. CobQ subfamily.

It functions in the pathway cofactor biosynthesis; adenosylcobalamin biosynthesis. Catalyzes amidations at positions B, D, E, and G on adenosylcobyrinic A,C-diamide. NH(2) groups are provided by glutamine, and one molecule of ATP is hydrogenolyzed for each amidation. This is Cobyric acid synthase from Herminiimonas arsenicoxydans.